A 235-amino-acid polypeptide reads, in one-letter code: Lipoprotein signal peptidase (235 aa).

The tract at residues M1–A23 is disordered. The next 3 membrane-spanning stretches (helical) occupy residues L31–V51, G84–G104, and V108–V128. Residues D144 and D158 contribute to the active site. A helical membrane pass occupies residues V156 to F176. Residues R185–S235 form a disordered region. Low complexity predominate over residues P201–P218.

It belongs to the peptidase A8 family.

Its subcellular location is the cell membrane. It carries out the reaction Release of signal peptides from bacterial membrane prolipoproteins. Hydrolyzes -Xaa-Yaa-Zaa-|-(S,diacylglyceryl)Cys-, in which Xaa is hydrophobic (preferably Leu), and Yaa (Ala or Ser) and Zaa (Gly or Ala) have small, neutral side chains.. The protein operates within protein modification; lipoprotein biosynthesis (signal peptide cleavage). Functionally, this protein specifically catalyzes the removal of signal peptides from prolipoproteins. The chain is Lipoprotein signal peptidase from Mycolicibacterium smegmatis (strain ATCC 700084 / mc(2)155) (Mycobacterium smegmatis).